A 123-amino-acid chain; its full sequence is Small ribosomal subunit protein uS12 (123 aa).

Position 89 is a 3-methylthioaspartic acid (aspartate 89). The interval 104 to 123 (TQGVKDRRQRRSKYGAKRPK) is disordered. A compositionally biased stretch (basic residues) spans 110–123 (RRQRRSKYGAKRPK).

It belongs to the universal ribosomal protein uS12 family. Part of the 30S ribosomal subunit. Contacts proteins S8 and S17. May interact with IF1 in the 30S initiation complex.

In terms of biological role, with S4 and S5 plays an important role in translational accuracy. Its function is as follows. Interacts with and stabilizes bases of the 16S rRNA that are involved in tRNA selection in the A site and with the mRNA backbone. Located at the interface of the 30S and 50S subunits, it traverses the body of the 30S subunit contacting proteins on the other side and probably holding the rRNA structure together. The combined cluster of proteins S8, S12 and S17 appears to hold together the shoulder and platform of the 30S subunit. The sequence is that of Small ribosomal subunit protein uS12 from Parvibaculum lavamentivorans (strain DS-1 / DSM 13023 / NCIMB 13966).